A 217-amino-acid polypeptide reads, in one-letter code: Probable transaldolase (217 aa).

The active-site Schiff-base intermediate with substrate is K83.

It belongs to the transaldolase family. Type 3B subfamily.

It is found in the cytoplasm. The catalysed reaction is D-sedoheptulose 7-phosphate + D-glyceraldehyde 3-phosphate = D-erythrose 4-phosphate + beta-D-fructose 6-phosphate. Its pathway is carbohydrate degradation; pentose phosphate pathway; D-glyceraldehyde 3-phosphate and beta-D-fructose 6-phosphate from D-ribose 5-phosphate and D-xylulose 5-phosphate (non-oxidative stage): step 2/3. In terms of biological role, transaldolase is important for the balance of metabolites in the pentose-phosphate pathway. The polypeptide is Probable transaldolase (Rhizobium meliloti (strain 1021) (Ensifer meliloti)).